Consider the following 211-residue polypeptide: uncharacterized protein (211 aa).

The segment at 1–43 (MRPEVGREPAALQPRQRPRSDHQLHRSPFTVPPRTPACRSPGP) is disordered.

This is an uncharacterized protein from Homo sapiens (Human).